A 494-amino-acid chain; its full sequence is NADPH:adrenodoxin oxidoreductase, mitochondrial (494 aa).

The transit peptide at 1–34 directs the protein to the mitochondrion; that stretch reads MAPRCWHWWRWSAWSGLRPSPSRSTPTPGFCQKF. Ala51, Glu72, Leu80, and Val116 together coordinate FAD. Residues 187-190, 231-232, and Glu243 contribute to the NADP(+) site; these read QGNV and RR. A Phosphoserine modification is found at Ser313. Residues Trp401 and 408-410 contribute to the FAD site; that span reads GVI. Gly408 lines the NADP(+) pocket.

This sequence belongs to the ferredoxin--NADP reductase type 1 family. Monomer. Interacts directly with FDX1. It depends on FAD as a cofactor. Expressed in the adrenal, testis and ovary and to a lesser extent in the liver and kidney.

It is found in the mitochondrion inner membrane. It carries out the reaction 2 reduced [adrenodoxin] + NADP(+) + H(+) = 2 oxidized [adrenodoxin] + NADPH. The catalysed reaction is 2 reduced [2Fe-2S]-[ferredoxin] + NADP(+) + H(+) = 2 oxidized [2Fe-2S]-[ferredoxin] + NADPH. The protein operates within steroid metabolism; cholesterol metabolism. Functionally, serves as the first electron transfer protein in all the mitochondrial P450 systems including cholesterol side chain cleavage in all steroidogenic tissues, steroid 11-beta hydroxylation in the adrenal cortex, 25-OH-vitamin D3-24 hydroxylation in the kidney, and sterol C-27 hydroxylation in the liver. Also acts as a ferredoxin--NADP(+) reductase essential for coenzyme Q biosynthesis: together with FDX2, transfers the electrons required for the hydroxylation reaction performed by COQ6. In Mus musculus (Mouse), this protein is NADPH:adrenodoxin oxidoreductase, mitochondrial (Fdxr).